A 202-amino-acid chain; its full sequence is Large ribosomal subunit protein bL17 (202 aa).

The interval 132–202 is disordered; sequence DAAQKAASAG…TEVEKADDDK (71 aa). Positions 134-168 are enriched in low complexity; it reads AQKAASAGAQEVTAAAAPQAAVEPEAVETEASAET. Residues 169–193 show a composition bias toward acidic residues; the sequence is AEAEVETAEVEAVDEASAEEADEAT.

It belongs to the bacterial ribosomal protein bL17 family. In terms of assembly, part of the 50S ribosomal subunit. Contacts protein L32.

The protein is Large ribosomal subunit protein bL17 of Mycolicibacterium vanbaalenii (strain DSM 7251 / JCM 13017 / BCRC 16820 / KCTC 9966 / NRRL B-24157 / PYR-1) (Mycobacterium vanbaalenii).